A 354-amino-acid polypeptide reads, in one-letter code: MGSGISSESKESAKRSKELEKKLQEDAERDARTVKLLLLGAGESGKSTIVKQMKIIHKNGYSKQECMEFKAVVYSNTLQSILAIVKAMTTLGIDYVNPRSREDQQLLLSMANTLEDGDMTPQLAEIIKRLWGDPGIQACFERASEYQLNDSAAYYLNDLDRLTAPGYVPNEQDVLHSRVKTTGIIETQFSFKDLNFRMFDVGGQRSERKKWIHCFEGVTCIIFCAALSAYDMVLVEDEEVNRMHESLHLFNSICNHKYFATTSIVLFLNKKDLFQEKVTKVHLSICFPEYTGPNTFEDAGNYIKNQFLDLNLKKEDKEIYSHMTCATDTQNVKFVFDAVTDIIIKENLKDCGLF.

The segment at 1–27 is disordered; that stretch reads MGSGISSESKESAKRSKELEKKLQEDA. Gly-2 carries N-myristoyl glycine lipidation. Residues 8 to 27 are compositionally biased toward basic and acidic residues; that stretch reads ESKESAKRSKELEKKLQEDA. The G-alpha domain occupies 32–354; the sequence is RTVKLLLLGA…KENLKDCGLF (323 aa). Residues 35–48 are G1 motif; sequence KLLLLGAGESGKST. Residues 40–47, 175–181, 200–204, 269–272, and Ala-326 each bind GTP; these read GAGESGKS, LHSRVKT, DVGGQ, and NKKD. Mg(2+) is bound by residues Ser-47 and Thr-181. The G2 motif stretch occupies residues 173–181; sequence DVLHSRVKT. Residues 196–205 are G3 motif; the sequence is FRMFDVGGQR. Positions 265–272 are G4 motif; it reads VLFLNKKD. Residues 324-329 form a G5 motif region; it reads TCATDT.

This sequence belongs to the G-alpha family. G(i/o/t/z) subfamily. As to quaternary structure, g proteins are composed of 3 units; alpha, beta and gamma, respectively GNAT3, GNB1 and GNG13 for Gustducin heterotrimer for bitter taste transduction. The alpha chain contains the guanine nucleotide binding site. Component of the TAS2R14-GNAT3 complex, consisting of TAS2R14, GNAT3, GNB1 and GNG2; within the complex interacts with TAS2R14; this complex plays a role in the perception of bitterness. Gustducin heterotrimer may also be composed of GNAT3, GNB3 and GNG13. Post-translationally, potential N-myristoylation may anchor alpha-subunit to the inner surface of plasma membrane. Expressed in taste buds (sensory organs of clustered epithelial cells) of the circumvallate, foliate and fungiform papillae of the tongue, as well as in nasoincisor, palatal and epiglottal taste buds at protein level. Expressed in enteroendocrine of the gut, in the lumenal pole of a subset of brush cells lining the stomach and the intestine at protein level. Detected in solitary cells throughout the respiratory track. Expressed also in spermatozoa.

It localises to the cytoplasm. Its function is as follows. Guanine nucleotide-binding protein (G protein) alpha subunit playing a prominent role in bitter and sweet taste transduction as well as in umami (monosodium glutamate, monopotassium glutamate, and inosine monophosphate) taste transduction. Transduction by this alpha subunit involves coupling of specific cell-surface receptors with a cGMP-phosphodiesterase; Activation of phosphodiesterase lowers intracellular levels of cAMP and cGMP which may open a cyclic nucleotide-suppressible cation channel leading to influx of calcium, ultimately leading to release of neurotransmitter. Indeed, denatonium and strychnine induce transient reduction in cAMP and cGMP in taste tissue, whereas this decrease is inhibited by GNAT3 antibody. Gustducin heterotrimer transduces response to bitter and sweet compounds via regulation of phosphodiesterase for alpha subunit, as well as via activation of phospholipase C for beta and gamma subunits, with ultimate increase inositol trisphosphate and increase of intracellular Calcium. GNAT3 can functionally couple to taste receptors to transmit intracellular signal: receptor heterodimer TAS1R2/TAS1R3 senses sweetness and TAS1R1/TAS1R3 transduces umami taste, whereas the T2R family GPCRs act as bitter sensors. Also functions as lumenal sugar sensors in the gut to control the expression of the Na+-glucose transporter SGLT1 in response to dietaty sugar, as well as the secretion of Glucagon-like peptide-1, GLP-1 and glucose-dependent insulinotropic polypeptide, GIP. Thus, may modulate the gut capacity to absorb sugars, with implications for the prevention and treatment of malabsorption syndromes and diet-related disorders including diabetes and obesity. The protein is Guanine nucleotide-binding protein G(t) subunit alpha-3 (Gnat3) of Rattus norvegicus (Rat).